The sequence spans 131 residues: Small ribosomal subunit protein uS9c (131 aa).

The protein belongs to the universal ribosomal protein uS9 family.

It localises to the plastid. Its subcellular location is the chloroplast. The protein is Small ribosomal subunit protein uS9c (rps9) of Emiliania huxleyi (Coccolithophore).